We begin with the raw amino-acid sequence, 167 residues long: Transcription antitermination protein NusB (167 aa).

Belongs to the NusB family.

Its function is as follows. Involved in transcription antitermination. Required for transcription of ribosomal RNA (rRNA) genes. Binds specifically to the boxA antiterminator sequence of the ribosomal RNA (rrn) operons. The polypeptide is Transcription antitermination protein NusB (Nitrosomonas europaea (strain ATCC 19718 / CIP 103999 / KCTC 2705 / NBRC 14298)).